The following is a 231-amino-acid chain: Fibrillarin-like rRNA/tRNA 2'-O-methyltransferase (231 aa).

Residues 89–90, 108–109, 133–134, and 153–156 each bind S-adenosyl-L-methionine; these read TT, EF, DA, and DIAQ.

It belongs to the methyltransferase superfamily. Fibrillarin family. As to quaternary structure, interacts with nop5. Component of box C/D small ribonucleoprotein (sRNP) particles that contain rpl7ae, FlpA and nop5, plus a guide RNA.

Its function is as follows. Involved in pre-rRNA and tRNA processing. Utilizes the methyl donor S-adenosyl-L-methionine to catalyze the site-specific 2'-hydroxyl methylation of ribose moieties in rRNA and tRNA. Site specificity is provided by a guide RNA that base pairs with the substrate. Methylation occurs at a characteristic distance from the sequence involved in base pairing with the guide RNA. This is Fibrillarin-like rRNA/tRNA 2'-O-methyltransferase from Sulfolobus acidocaldarius (strain ATCC 33909 / DSM 639 / JCM 8929 / NBRC 15157 / NCIMB 11770).